The sequence spans 142 residues: Transcription antitermination protein NusB (142 aa).

Belongs to the NusB family.

Functionally, involved in transcription antitermination. Required for transcription of ribosomal RNA (rRNA) genes. Binds specifically to the boxA antiterminator sequence of the ribosomal RNA (rrn) operons. This is Transcription antitermination protein NusB from Latilactobacillus sakei subsp. sakei (strain 23K) (Lactobacillus sakei subsp. sakei).